Consider the following 436-residue polypeptide: Serine--tRNA ligase (436 aa).

242-244 contributes to the L-serine binding site; that stretch reads TAE. 273-275 contacts ATP; the sequence is RSE. E296 is an L-serine binding site. 360-363 is an ATP binding site; it reads EISS. S395 is an L-serine binding site.

The protein belongs to the class-II aminoacyl-tRNA synthetase family. Type-1 seryl-tRNA synthetase subfamily. As to quaternary structure, homodimer. The tRNA molecule binds across the dimer.

It localises to the cytoplasm. It carries out the reaction tRNA(Ser) + L-serine + ATP = L-seryl-tRNA(Ser) + AMP + diphosphate + H(+). The enzyme catalyses tRNA(Sec) + L-serine + ATP = L-seryl-tRNA(Sec) + AMP + diphosphate + H(+). It participates in aminoacyl-tRNA biosynthesis; selenocysteinyl-tRNA(Sec) biosynthesis; L-seryl-tRNA(Sec) from L-serine and tRNA(Sec): step 1/1. Functionally, catalyzes the attachment of serine to tRNA(Ser). Is also able to aminoacylate tRNA(Sec) with serine, to form the misacylated tRNA L-seryl-tRNA(Sec), which will be further converted into selenocysteinyl-tRNA(Sec). This Polynucleobacter necessarius subsp. necessarius (strain STIR1) protein is Serine--tRNA ligase.